We begin with the raw amino-acid sequence, 86 residues long: Anti-adapter protein IraP (86 aa).

Residues 1–36 adopt a coiled-coil conformation; it reads MKNLIAELLFKLAQKEEESKELCAQVEALEIIVTAM.

Belongs to the IraP family. In terms of assembly, interacts with RssB.

The protein resides in the cytoplasm. Inhibits RpoS proteolysis by regulating RssB activity, thereby increasing the stability of the sigma stress factor RpoS especially during phosphate starvation, but also in stationary phase and during nitrogen starvation. Its effect on RpoS stability is due to its interaction with RssB, which probably blocks the interaction of RssB with RpoS, and the consequent delivery of the RssB-RpoS complex to the ClpXP protein degradation pathway. In Escherichia coli O7:K1 (strain IAI39 / ExPEC), this protein is Anti-adapter protein IraP.